We begin with the raw amino-acid sequence, 505 residues long: Maturase K (505 aa).

The protein belongs to the intron maturase 2 family. MatK subfamily.

The protein resides in the plastid. It is found in the chloroplast. Usually encoded in the trnK tRNA gene intron. Probably assists in splicing its own and other chloroplast group II introns. In Chiococca alba (West Indian milkberry), this protein is Maturase K.